The following is a 128-amino-acid chain: Cytochrome c oxidase subunit 5B, mitochondrial (128 aa).

The N-terminal 30 residues, Met1 to Asn30, are a transit peptide targeting the mitochondrion. An N6-acetyllysine mark is found at Lys67 and Lys85. Zn(2+) is bound by residues Cys90, Cys92, Cys112, and Cys115. Lys120 bears the N6-acetyllysine mark.

This sequence belongs to the cytochrome c oxidase 5b family. In terms of tissue distribution, expressed in testis. Not expressed in brain, heart, liver, kidney, spleen, lung, duodenum, muscle, epididymis, vagina, uterus and ovary.

Its subcellular location is the mitochondrion inner membrane. This protein is one of the nuclear-coded polypeptide chains of cytochrome c oxidase, the terminal oxidase in mitochondrial electron transport. This is Cytochrome c oxidase subunit 5B, mitochondrial from Vulpes vulpes (Red fox).